The primary structure comprises 793 residues: Transcription factor opdR (793 aa).

Disordered stretches follow at residues 1 to 29, 60 to 113, and 457 to 476; these read MAQD…DPCR, TASS…QSQN, and LDDE…QPSE. The zn(2)-C6 fungal-type DNA-binding region spans 25–53; that stretch reads CDPCRRRKVRCDRKFPCGQCERARTALQC.

It is found in the nucleus. Its function is as follows. Transcription factor; part of the gene cluster that mediates the biosynthesis of oxopyrrolidines, polyketide-amino acid hybrid compounds with feature structures of tetramic acid. In Penicillium oxalicum (strain 114-2 / CGMCC 5302) (Penicillium decumbens), this protein is Transcription factor opdR.